The sequence spans 190 residues: Small ribosomal subunit protein mS23 (190 aa).

Alanine 2 is modified (N-acetylalanine). Position 83 is an N6-succinyllysine (lysine 83). An N6-acetyllysine modification is found at lysine 102. The segment at 137–190 (KARTQQEGSQVSRKSESMGVESQTALEENPPLKEVPQAQHLESPGEESKGLSPP) is disordered.

The protein belongs to the mitochondrion-specific ribosomal protein mS23 family. Component of the mitochondrial ribosome small subunit (28S) which comprises a 12S rRNA and about 30 distinct proteins.

It is found in the mitochondrion. The sequence is that of Small ribosomal subunit protein mS23 from Bos taurus (Bovine).